We begin with the raw amino-acid sequence, 372 residues long: Alanine dehydrogenase 1 (372 aa).

Residue His94 is part of the active site. 170 to 200 lines the NAD(+) pocket; sequence TYVIFGGGVAATNAANVALGLNAKVIIIELN.

Belongs to the AlaDH/PNT family.

It catalyses the reaction L-alanine + NAD(+) + H2O = pyruvate + NH4(+) + NADH + H(+). It participates in amino-acid degradation; L-alanine degradation via dehydrogenase pathway; NH(3) and pyruvate from L-alanine: step 1/1. In terms of biological role, may play a role in cell wall synthesis as L-alanine is an important constituent of the peptidoglycan layer. The protein is Alanine dehydrogenase 1 (ald1) of Staphylococcus aureus (strain MSSA476).